Consider the following 365-residue polypeptide: Spermidine/putrescine import ATP-binding protein PotA (365 aa).

The ABC transporter domain maps to 9–239; that stretch reads IRLTNVTKSY…PINHFVANFI (231 aa). ATP is bound at residue 41–48; it reads GPSGCGKT.

This sequence belongs to the ABC transporter superfamily. Spermidine/putrescine importer (TC 3.A.1.11.1) family. As to quaternary structure, the complex is composed of two ATP-binding proteins (PotA), two transmembrane proteins (PotB and PotC) and a solute-binding protein (PotD).

It localises to the cell membrane. The enzyme catalyses ATP + H2O + polyamine-[polyamine-binding protein]Side 1 = ADP + phosphate + polyamineSide 2 + [polyamine-binding protein]Side 1.. Part of the ABC transporter complex PotABCD involved in spermidine/putrescine import. Responsible for energy coupling to the transport system. This chain is Spermidine/putrescine import ATP-binding protein PotA, found in Lactiplantibacillus plantarum (strain ATCC BAA-793 / NCIMB 8826 / WCFS1) (Lactobacillus plantarum).